We begin with the raw amino-acid sequence, 301 residues long: tRNA dimethylallyltransferase (301 aa).

12–19 serves as a coordination point for ATP; it reads GPTASGKT. Position 14–19 (14–19) interacts with substrate; the sequence is TASGKT. The tract at residues 37–40 is interaction with substrate tRNA; that stretch reads DSLS.

It belongs to the IPP transferase family. In terms of assembly, monomer. Mg(2+) serves as cofactor.

The catalysed reaction is adenosine(37) in tRNA + dimethylallyl diphosphate = N(6)-dimethylallyladenosine(37) in tRNA + diphosphate. Functionally, catalyzes the transfer of a dimethylallyl group onto the adenine at position 37 in tRNAs that read codons beginning with uridine, leading to the formation of N6-(dimethylallyl)adenosine (i(6)A). The chain is tRNA dimethylallyltransferase from Sulfurovum sp. (strain NBC37-1).